The sequence spans 470 residues: Neuraminidase (470 aa).

Residues 1–14 (MNPNQKILCTSATA) are Intravirion-facing. An involved in apical transport and lipid raft association region spans residues 11-33 (SATALVIGTIAVLIGITNLGLNI). A helical transmembrane segment spans residues 15-35 (LVIGTIAVLIGITNLGLNIGL). Residues 36-89 (HLKPSCNCSHSQPEATNASQTIINNYYNDTNITQISNTNIQVEERAIRDFNNLT) form a hypervariable stalk region region. Residues 36 to 470 (HLKPSCNCSH…PDGAKIEYFL (435 aa)) lie on the Virion surface side of the membrane. N-linked (GlcNAc...) asparagine; by host glycans are attached at residues Asn42, Asn52, Asn63, Asn66, and Asn87. The tract at residues 92-470 (LCTINSWHIY…PDGAKIEYFL (379 aa)) is head of neuraminidase. 9 disulfide bridges follow: Cys93/Cys419, Cys125/Cys130, Cys177/Cys195, Cys185/Cys232, Cys234/Cys239, Cys280/Cys293, Cys282/Cys291, Cys320/Cys338, and Cys423/Cys449. Arg119 provides a ligand contact to substrate. A glycan (N-linked (GlcNAc...) asparagine; by host) is linked at Asn147. Asp152 functions as the Proton donor/acceptor in the catalytic mechanism. Arg153 contacts substrate. Residue Asn202 is glycosylated (N-linked (GlcNAc...) asparagine; by host). 278–279 (EE) provides a ligand contact to substrate. Arg294 serves as a coordination point for substrate. Ca(2+)-binding residues include Asp295, Gly299, Asp326, and Asn348. Arg372 lines the substrate pocket. Catalysis depends on Tyr406, which acts as the Nucleophile.

It belongs to the glycosyl hydrolase 34 family. As to quaternary structure, homotetramer. Ca(2+) serves as cofactor. In terms of processing, N-glycosylated.

It is found in the virion membrane. It localises to the host apical cell membrane. It carries out the reaction Hydrolysis of alpha-(2-&gt;3)-, alpha-(2-&gt;6)-, alpha-(2-&gt;8)- glycosidic linkages of terminal sialic acid residues in oligosaccharides, glycoproteins, glycolipids, colominic acid and synthetic substrates.. Its activity is regulated as follows. Inhibited by the neuraminidase inhibitors zanamivir (Relenza) and oseltamivir (Tamiflu). These drugs interfere with the release of progeny virus from infected cells and are effective against all influenza strains. Resistance to neuraminidase inhibitors is quite rare. In terms of biological role, catalyzes the removal of terminal sialic acid residues from viral and cellular glycoconjugates. Cleaves off the terminal sialic acids on the glycosylated HA during virus budding to facilitate virus release. Additionally helps virus spread through the circulation by further removing sialic acids from the cell surface. These cleavages prevent self-aggregation and ensure the efficient spread of the progeny virus from cell to cell. Otherwise, infection would be limited to one round of replication. Described as a receptor-destroying enzyme because it cleaves a terminal sialic acid from the cellular receptors. May facilitate viral invasion of the upper airways by cleaving the sialic acid moieties on the mucin of the airway epithelial cells. Likely to plays a role in the budding process through its association with lipid rafts during intracellular transport. May additionally display a raft-association independent effect on budding. Plays a role in the determination of host range restriction on replication and virulence. Sialidase activity in late endosome/lysosome traffic seems to enhance virus replication. The protein is Neuraminidase of Aves.